A 245-amino-acid chain; its full sequence is Demethylmenaquinone methyltransferase (245 aa).

Residues threonine 58, aspartate 79, and 106–107 each bind S-adenosyl-L-methionine; that span reads NA.

It belongs to the class I-like SAM-binding methyltransferase superfamily. MenG/UbiE family.

It catalyses the reaction a 2-demethylmenaquinol + S-adenosyl-L-methionine = a menaquinol + S-adenosyl-L-homocysteine + H(+). It functions in the pathway quinol/quinone metabolism; menaquinone biosynthesis; menaquinol from 1,4-dihydroxy-2-naphthoate: step 2/2. Methyltransferase required for the conversion of demethylmenaquinol (DMKH2) to menaquinol (MKH2). In Halalkalibacterium halodurans (strain ATCC BAA-125 / DSM 18197 / FERM 7344 / JCM 9153 / C-125) (Bacillus halodurans), this protein is Demethylmenaquinone methyltransferase.